A 111-amino-acid polypeptide reads, in one-letter code: Translation initiation factor 1A (111 aa).

The 73-residue stretch at 11 to 83 (KKIRLPKEGE…ERADVTWRYT (73 aa)) folds into the S1-like domain.

It belongs to the eIF-1A family.

Functionally, seems to be required for maximal rate of protein biosynthesis. Enhances ribosome dissociation into subunits and stabilizes the binding of the initiator Met-tRNA(I) to 40 S ribosomal subunits. The sequence is that of Translation initiation factor 1A (eIF1A) from Methanopyrus kandleri (strain AV19 / DSM 6324 / JCM 9639 / NBRC 100938).